A 179-amino-acid chain; its full sequence is MSRIGKMPIALAKEAKLEISEGNLRVSGPKGVLEQALVEEVKVLQEEGLVKVERINDSKRSRAMHGLYRMLLSNMIEGVTKGFTRKLEIAGVGFRAEMKGDLLALTLGFSHMIYFKAPEGVKLETPDPVTVLVSGIDKALIGQVAAKIRSFRKPEPYRGKGIKYEGEVIRRKEGKAAGK.

It belongs to the universal ribosomal protein uL6 family. Part of the 50S ribosomal subunit.

Functionally, this protein binds to the 23S rRNA, and is important in its secondary structure. It is located near the subunit interface in the base of the L7/L12 stalk, and near the tRNA binding site of the peptidyltransferase center. The sequence is that of Large ribosomal subunit protein uL6 from Chlorobium phaeovibrioides (strain DSM 265 / 1930) (Prosthecochloris vibrioformis (strain DSM 265)).